A 457-amino-acid polypeptide reads, in one-letter code: tRNA modification GTPase MnmE (457 aa).

(6S)-5-formyl-5,6,7,8-tetrahydrofolate contacts are provided by arginine 22, glutamate 83, and arginine 122. The 160-residue stretch at 219 to 378 (GLATAIIGRP…LEEAIKTLFF (160 aa)) folds into the TrmE-type G domain. Asparagine 229 contributes to the K(+) binding site. GTP is bound by residues 229-234 (NVGKSS), 248-254 (TDIAGTT), and 273-276 (DTAG). Serine 233 is a Mg(2+) binding site. Threonine 248, isoleucine 250, and threonine 253 together coordinate K(+). Threonine 254 is a binding site for Mg(2+). Lysine 457 provides a ligand contact to (6S)-5-formyl-5,6,7,8-tetrahydrofolate.

It belongs to the TRAFAC class TrmE-Era-EngA-EngB-Septin-like GTPase superfamily. TrmE GTPase family. Homodimer. Heterotetramer of two MnmE and two MnmG subunits. The cofactor is K(+).

Its subcellular location is the cytoplasm. Functionally, exhibits a very high intrinsic GTPase hydrolysis rate. Involved in the addition of a carboxymethylaminomethyl (cmnm) group at the wobble position (U34) of certain tRNAs, forming tRNA-cmnm(5)s(2)U34. The polypeptide is tRNA modification GTPase MnmE (Listeria welshimeri serovar 6b (strain ATCC 35897 / DSM 20650 / CCUG 15529 / CIP 8149 / NCTC 11857 / SLCC 5334 / V8)).